Reading from the N-terminus, the 134-residue chain is Fatty acid-binding protein, muscle (134 aa).

(9Z)-octadecenoate is bound by residues Arg-109 and 129-131; that span reads RIY.

Belongs to the calycin superfamily. Fatty-acid binding protein (FABP) family. As to quaternary structure, monomer. In terms of tissue distribution, adult flight muscle.

It localises to the cytoplasm. Binds fatty acids in a 1:1 molar ratio. This Schistocerca gregaria (Desert locust) protein is Fatty acid-binding protein, muscle.